Reading from the N-terminus, the 91-residue chain is Putative membrane protein insertion efficiency factor (91 aa).

It belongs to the UPF0161 family.

The protein localises to the cell inner membrane. Functionally, could be involved in insertion of integral membrane proteins into the membrane. This Saccharophagus degradans (strain 2-40 / ATCC 43961 / DSM 17024) protein is Putative membrane protein insertion efficiency factor.